Reading from the N-terminus, the 376-residue chain is Probable allantoicase (376 aa).

The protein belongs to the allantoicase family.

It catalyses the reaction allantoate + H2O = (S)-ureidoglycolate + urea. The protein operates within nitrogen metabolism; (S)-allantoin degradation; (S)-ureidoglycolate from allantoate (aminidohydrolase route): step 1/1. This chain is Probable allantoicase, found in Streptomyces coelicolor (strain ATCC BAA-471 / A3(2) / M145).